Consider the following 147-residue polypeptide: uncharacterized protein (147 aa).

The HTH LytTR-type domain maps to 44-147 (LVGYIDKEIH…LKSIKERLSI (104 aa)).

Its subcellular location is the cytoplasm. This is an uncharacterized protein from Staphylococcus aureus (strain Mu50 / ATCC 700699).